A 699-amino-acid chain; its full sequence is Polyribonucleotide nucleotidyltransferase (699 aa).

Mg(2+) contacts are provided by D484 and D490. The 60-residue stretch at 551-610 folds into the KH domain; sequence PRITTIQVKPDQVRTVIGPGGKNVRGIIEATGCAIDIEDDGRINIASADGDACKAAIKMI. Residues 620 to 688 form the S1 motif domain; it reads GKLYMATVKK…RQGKIKLSRK (69 aa).

The protein belongs to the polyribonucleotide nucleotidyltransferase family. Mg(2+) serves as cofactor.

It is found in the cytoplasm. The catalysed reaction is RNA(n+1) + phosphate = RNA(n) + a ribonucleoside 5'-diphosphate. Its function is as follows. Involved in mRNA degradation. Catalyzes the phosphorolysis of single-stranded polyribonucleotides processively in the 3'- to 5'-direction. This chain is Polyribonucleotide nucleotidyltransferase, found in Syntrophotalea carbinolica (strain DSM 2380 / NBRC 103641 / GraBd1) (Pelobacter carbinolicus).